The chain runs to 231 residues: MARICVALDVPWERAIKIVKDLYDFFETYPLILKIGHKIYLEKGGDAVKELKEDFPYEVFLDLKLHDIPSVVGLAVEKISELGTDYTTVHLLGGPEMVKEAVKNKGSMKILGVTILTSHDENYIKFLKSNFEDIKNFTLYLARVGIENGVDGVVCSGEEVEFLKKNIEKDFIAVVPGIRIKKEKRHDQKRVLTPAEAKKRGADVIVIGREITESKNPVYVVERALKMMGEI.

Substrate contacts are provided by residues D9, K34, 62-71 (DLKLHDIPSV), T117, R179, Q188, G208, and R209. K64 (proton donor) is an active-site residue.

The protein belongs to the OMP decarboxylase family. Type 1 subfamily. Homodimer.

The catalysed reaction is orotidine 5'-phosphate + H(+) = UMP + CO2. It participates in pyrimidine metabolism; UMP biosynthesis via de novo pathway; UMP from orotate: step 2/2. Functionally, catalyzes the decarboxylation of orotidine 5'-monophosphate (OMP) to uridine 5'-monophosphate (UMP). The polypeptide is Orotidine 5'-phosphate decarboxylase (Aquifex aeolicus (strain VF5)).